The primary structure comprises 367 residues: Aminomethyltransferase (367 aa).

Belongs to the GcvT family. The glycine cleavage system is composed of four proteins: P, T, L and H.

The catalysed reaction is N(6)-[(R)-S(8)-aminomethyldihydrolipoyl]-L-lysyl-[protein] + (6S)-5,6,7,8-tetrahydrofolate = N(6)-[(R)-dihydrolipoyl]-L-lysyl-[protein] + (6R)-5,10-methylene-5,6,7,8-tetrahydrofolate + NH4(+). In terms of biological role, the glycine cleavage system catalyzes the degradation of glycine. The chain is Aminomethyltransferase from Mycobacterium bovis (strain ATCC BAA-935 / AF2122/97).